The primary structure comprises 180 residues: Large ribosomal subunit protein uL5 (180 aa).

Belongs to the universal ribosomal protein uL5 family. Part of the 50S ribosomal subunit; part of the 5S rRNA/L5/L18/L25 subcomplex. Contacts the 5S rRNA and the P site tRNA. Forms a bridge to the 30S subunit in the 70S ribosome.

Functionally, this is one of the proteins that bind and probably mediate the attachment of the 5S RNA into the large ribosomal subunit, where it forms part of the central protuberance. In the 70S ribosome it contacts protein S13 of the 30S subunit (bridge B1b), connecting the 2 subunits; this bridge is implicated in subunit movement. Contacts the P site tRNA; the 5S rRNA and some of its associated proteins might help stabilize positioning of ribosome-bound tRNAs. This is Large ribosomal subunit protein uL5 from Pediococcus pentosaceus (strain ATCC 25745 / CCUG 21536 / LMG 10740 / 183-1w).